The following is a 709-amino-acid chain: Polyribonucleotide nucleotidyltransferase (709 aa).

Residues aspartate 485 and aspartate 491 each coordinate Mg(2+). A KH domain is found at 552–611 (PRIYTMKIDPKKIKDVIGKGGATIRSLTEETGTSIDIDDDGTVKIAAVDSNAAKNVMGRI). An S1 motif domain is found at 621–689 (GAIYKGKVTR…RQGRIRLTMK (69 aa)).

The protein belongs to the polyribonucleotide nucleotidyltransferase family. In terms of assembly, component of the RNA degradosome, which is a multiprotein complex involved in RNA processing and mRNA degradation. Mg(2+) is required as a cofactor.

The protein resides in the cytoplasm. It carries out the reaction RNA(n+1) + phosphate = RNA(n) + a ribonucleoside 5'-diphosphate. Functionally, involved in mRNA degradation. Catalyzes the phosphorolysis of single-stranded polyribonucleotides processively in the 3'- to 5'-direction. This Haemophilus influenzae (strain PittGG) protein is Polyribonucleotide nucleotidyltransferase.